The following is a 92-amino-acid chain: MSNVAENNDGVYDAPTGITAPPIDELLKHVSSKYALVIFAAKRARQINSYYQQADEGVFEFVGPLVTPEAQEKPLSIAMREIEAGLLDHEEG.

It belongs to the RNA polymerase subunit omega family. In terms of assembly, the RNAP catalytic core consists of 2 alpha, 1 beta, 1 beta' and 1 omega subunit. When a sigma factor is associated with the core the holoenzyme is formed, which can initiate transcription.

It catalyses the reaction RNA(n) + a ribonucleoside 5'-triphosphate = RNA(n+1) + diphosphate. Functionally, promotes RNA polymerase assembly. Latches the N- and C-terminal regions of the beta' subunit thereby facilitating its interaction with the beta and alpha subunits. The polypeptide is DNA-directed RNA polymerase subunit omega (Corynebacterium diphtheriae (strain ATCC 700971 / NCTC 13129 / Biotype gravis)).